Consider the following 66-residue polypeptide: Large ribosomal subunit protein eL29 (66 aa).

The segment covering 1-14 has biased composition (polar residues); sequence MAKSKNSTNKNQIS. Residues 1–66 are disordered; it reads MAKSKNSTNK…KNLEKKVNKE (66 aa). Basic residues predominate over residues 15–31; sequence KSHRNGIKKPKDHRHIS. Positions 47-66 are enriched in basic and acidic residues; the sequence is IKNDPSIKKSKNLEKKVNKE.

This sequence belongs to the eukaryotic ribosomal protein eL29 family.

It localises to the cytoplasm. The sequence is that of Large ribosomal subunit protein eL29 (RPL29) from Tetrahymena thermophila.